The chain runs to 197 residues: MEECLHNMMLLHNPLTHELNIKNLYICTMCGFSHVCNEESSNCKILETSEGVVCLYTGLTHLERFPCIINICPNDSDHDTIDIDYMNTVQSILRRVFVFFKTYEFKYVHVTNEIFTENEFKPHVLTAVITTFRRVFTSQKLIDKVSIFTISKLFIQLLIGKYAKQTTYDTNVIKVSKRKREDTLLKQMRYEYGNSSL.

The protein belongs to the herpesviridae UL92 family.

This chain is Protein U63, found in Elephas maximus (Indian elephant).